A 72-amino-acid chain; its full sequence is Translation initiation factor IF-1 (72 aa).

Positions 1–72 (MAKEETIQMQ…TRARITFRTK (72 aa)) constitute an S1-like domain.

This sequence belongs to the IF-1 family. In terms of assembly, component of the 30S ribosomal translation pre-initiation complex which assembles on the 30S ribosome in the order IF-2 and IF-3, IF-1 and N-formylmethionyl-tRNA(fMet); mRNA recruitment can occur at any time during PIC assembly.

It is found in the cytoplasm. Functionally, one of the essential components for the initiation of protein synthesis. Stabilizes the binding of IF-2 and IF-3 on the 30S subunit to which N-formylmethionyl-tRNA(fMet) subsequently binds. Helps modulate mRNA selection, yielding the 30S pre-initiation complex (PIC). Upon addition of the 50S ribosomal subunit IF-1, IF-2 and IF-3 are released leaving the mature 70S translation initiation complex. This is Translation initiation factor IF-1 from Nitrosomonas eutropha (strain DSM 101675 / C91 / Nm57).